The primary structure comprises 224 residues: Putative MgpC-like protein MPN_150 (224 aa).

The protein belongs to the MgpC family.

This is Putative MgpC-like protein MPN_150 from Mycoplasma pneumoniae (strain ATCC 29342 / M129 / Subtype 1) (Mycoplasmoides pneumoniae).